The following is a 192-amino-acid chain: MSKEAYFSGESIQLSDMLRAREERALRQLHLLKEYPEGSLLSVTMNIPGPIKTSPKLLEAFDIVIKAIQTALADDKICYQLRLLPTTGYEYYLITSLPSRDLKLKMIALETELPIGRLMDLDVLVLQNDLPHSISRTVLGGSPRQCFICSKEAKVCGRLRKHSVEEMQTAISKLLHSFFNKDNQSSSSDKTG.

It belongs to the CitX family.

It catalyses the reaction apo-[citrate lyase ACP] + 2'-(5''-triphospho-alpha-D-ribosyl)-3'-dephospho-CoA = holo-[citrate lyase ACP] + diphosphate. Functionally, transfers 2-(5''-triphosphoribosyl)-3'-dephosphocoenzyme-A on a serine residue to the apo-acyl carrier protein (gamma chain) of the citrate lyase to yield holo-acyl carrier protein. In Streptococcus pyogenes serotype M6 (strain ATCC BAA-946 / MGAS10394), this protein is Probable apo-citrate lyase phosphoribosyl-dephospho-CoA transferase.